The chain runs to 92 residues: Small ribosomal subunit protein uS17 (92 aa).

This sequence belongs to the universal ribosomal protein uS17 family. Part of the 30S ribosomal subunit.

Functionally, one of the primary rRNA binding proteins, it binds specifically to the 5'-end of 16S ribosomal RNA. This Bordetella petrii (strain ATCC BAA-461 / DSM 12804 / CCUG 43448) protein is Small ribosomal subunit protein uS17.